The chain runs to 464 residues: CRISPR system endoribonuclease Csm6 (464 aa).

A CARF domain region spans residues 1–190 (MEDLDALWER…LRILPNPHEA (190 aa)). The segment at 191–464 (LAEVDALFAK…LSPEPVPLGF (274 aa)) is HEPN domain.

The protein belongs to the CRISPR-associated Csm6 family. In terms of assembly, homodimer. The protein forms a twisted, head-to-head dimer; the composite ssRNase active site is formed at the dimer interface. Does not require a metal cofactor. is required as a cofactor.

With respect to regulation, non-specific ssRNase activity is allosterically activated about 1000-fold by cyclic tetraadenylate (cA4), which probably binds to its CARF domain. Its function is as follows. CRISPR (clustered regularly interspaced short palindromic repeat) is an adaptive immune system that provides protection against mobile genetic elements (viruses, transposable elements and conjugative plasmids). CRISPR clusters contain spacers, sequences complementary to antecedent mobile elements, and target invading nucleic acids. CRISPR clusters are transcribed and processed into CRISPR RNA (crRNA). The type III-A Csm effector complex binds crRNA and acts as a crRNA-guided RNase, DNase and cyclic oligoadenylate synthase; binding of target RNA cognate to the crRNA is required for all activities. This protein is not part of the Csm effector complex. Functionally, a single-strand-specific endoribonuclease (ssRNase) producing free 5'-OH. Activity is approximately 1000-fold stimulated by cyclic oligoadenylate (cOA); only cyclic tetraadenylate (cA4) stimulates the ssRNase activity while linear oligoadenylates do not activate the RNase. Another study showed stimulation by linear tetraadenylate at very high concentrations, but did not examine stimulation by cA4. This Thermus thermophilus (strain ATCC 27634 / DSM 579 / HB8) protein is CRISPR system endoribonuclease Csm6.